Here is a 212-residue protein sequence, read N- to C-terminus: Ribonuclease HII (212 aa).

An RNase H type-2 domain is found at 1-206; that stretch reads MICGVDEAGK…VKNLLHQKNQ (206 aa). D6, E7, and D101 together coordinate a divalent metal cation.

Belongs to the RNase HII family. Mn(2+) serves as cofactor. It depends on Mg(2+) as a cofactor.

The protein localises to the cytoplasm. The catalysed reaction is Endonucleolytic cleavage to 5'-phosphomonoester.. Functionally, endonuclease that specifically degrades the RNA of RNA-DNA hybrids. In Methanospirillum hungatei JF-1 (strain ATCC 27890 / DSM 864 / NBRC 100397 / JF-1), this protein is Ribonuclease HII.